Consider the following 510-residue polypeptide: Lysine--tRNA ligase (510 aa).

Mg(2+) contacts are provided by Glu-420 and Glu-427.

It belongs to the class-II aminoacyl-tRNA synthetase family. In terms of assembly, homodimer. It depends on Mg(2+) as a cofactor.

The protein resides in the cytoplasm. The enzyme catalyses tRNA(Lys) + L-lysine + ATP = L-lysyl-tRNA(Lys) + AMP + diphosphate. The chain is Lysine--tRNA ligase from Vibrio vulnificus (strain CMCP6).